The chain runs to 238 residues: Small ribosomal subunit protein uS3 (238 aa).

A KH type-2 domain is found at 39–107 (MREFIHDYAK…ELHLNIVEIR (69 aa)). The segment covering 212-222 (PQAHDRRHSEA) has biased composition (basic and acidic residues). The tract at residues 212–238 (PQAHDRRHSEAQEGAAPRPPRRDRERA) is disordered.

This sequence belongs to the universal ribosomal protein uS3 family. In terms of assembly, part of the 30S ribosomal subunit. Forms a tight complex with proteins S10 and S14.

Its function is as follows. Binds the lower part of the 30S subunit head. Binds mRNA in the 70S ribosome, positioning it for translation. This chain is Small ribosomal subunit protein uS3, found in Cereibacter sphaeroides (strain ATCC 17025 / ATH 2.4.3) (Rhodobacter sphaeroides).